The sequence spans 401 residues: Elongation factor Tu, apicoplast (401 aa).

The tr-type G domain occupies 10–206 (KPHINIGTIG…ALDSYIPLPK (197 aa)). Residues 19–26 (GHVDHGKT) form a G1 region. 19 to 26 (GHVDHGKT) lines the GTP pocket. Residue T26 participates in Mg(2+) binding. Residues 60–64 (GITIK) are G2. Residues 81–84 (DCPG) are G3. Residues 81–85 (DCPGH) and 136–139 (NKID) contribute to the GTP site. A G4 region spans residues 136–139 (NKID). The tract at residues 173-175 (SAL) is G5.

The protein belongs to the TRAFAC class translation factor GTPase superfamily. Classic translation factor GTPase family. EF-Tu/EF-1A subfamily. In terms of assembly, monomer.

The protein resides in the plastid. It is found in the apicoplast. The catalysed reaction is GTP + H2O = GDP + phosphate + H(+). In terms of biological role, GTP hydrolase that promotes the GTP-dependent binding of aminoacyl-tRNA to the A-site of ribosomes during protein biosynthesis. The sequence is that of Elongation factor Tu, apicoplast (tufA) from Toxoplasma gondii.